Here is a 100-residue protein sequence, read N- to C-terminus: Spleen trypsin inhibitor I (100 aa).

An N-terminal signal peptide occupies residues 1 to 21; it reads MKMSRLCLSIALLVLLGTLAA. Positions 22 to 33 are excised as a propeptide; it reads STPGCDTSNQAK. The region spanning 40-90 is the BPTI/Kunitz inhibitor domain; it reads CLEPPYTGPCKAKMIRYFYNAKAGFCETFVYGGCKAKSNNFRSAEDCMRTC. 3 cysteine pairs are disulfide-bonded: cysteine 40-cysteine 90, cysteine 49-cysteine 73, and cysteine 65-cysteine 86. Leucine 100 is a propeptide.

It is found in the secreted. The polypeptide is Spleen trypsin inhibitor I (Bos taurus (Bovine)).